The following is a 459-amino-acid chain: Putative metabolite transport protein YdjK (459 aa).

Topologically, residues 1–25 (MEQITKPHCGARLDRLPDCRWHSSM) are cytoplasmic. A helical membrane pass occupies residues 26-46 (FAIVAFGLLVCWSNAVGGLIL). Over 47-60 (AQLKALGWTDNSTT) the chain is Periplasmic. A helical membrane pass occupies residues 61-81 (ATFSAITTAGMFLGALVGGII). Residues 82–90 (GDKTGRRNA) are Cytoplasmic-facing. A helical membrane pass occupies residues 91–111 (FILYEAIHIASMVVGAFSPNM). A topological domain (periplasmic) is located at residue aspartate 112. Residues 113 to 133 (FLIACRFVMGVGLGALLVTLF) traverse the membrane as a helical segment. Residues 134–153 (AGFTEYMPGRNRGTWSSRVS) are Cytoplasmic-facing. Residues 154–174 (FIGNWSYPLCSLIAMGLTPLI) form a helical membrane-spanning segment. The Periplasmic portion of the chain corresponds to 175 to 181 (SAEWNWR). A helical membrane pass occupies residues 182–202 (VQLLIPAILSLIATALAWRYF). Residues 203–271 (PESPRWLESR…LLKRVILGSC (69 aa)) lie on the Cytoplasmic side of the membrane. The helical transmembrane segment at 272-292 (VLIAMNVVQYTLINWLPTIFM) threads the bilayer. Over 293-301 (TQGINLKDS) the chain is Periplasmic. The helical transmembrane segment at 302–322 (IVLNTMSMFGAPFGIFIAMLV) threads the bilayer. The Cytoplasmic portion of the chain corresponds to 323–329 (MDKIPRK). A helical transmembrane segment spans residues 330–350 (TMGVGLLILIAVLGYIYSLQT). A topological domain (periplasmic) is located at residue serine 351. A helical membrane pass occupies residues 352-372 (MLLITLIGFFLITFVYMYVCY). The Cytoplasmic portion of the chain corresponds to 373 to 399 (ASAVYVPEIWPTEAKLRGSGLANAVGR). 2 consecutive transmembrane segments (helical) span residues 400–420 (ISGI…GVTG) and 421–441 (VFIL…TIGI). The Cytoplasmic portion of the chain corresponds to 442 to 459 (ETKGVSVESLSIDAVANK).

Belongs to the major facilitator superfamily. Sugar transporter (TC 2.A.1.1) family.

It is found in the cell inner membrane. This Escherichia coli (strain K12) protein is Putative metabolite transport protein YdjK (ydjK).